We begin with the raw amino-acid sequence, 1810 residues long: Trinucleotide repeat-containing gene 6B protein (1810 aa).

Acidic residues predominate over residues 1–22 (MQTNEGEVEEESSSQVEQEDFV). Disordered regions lie at residues 1-221 (MQTN…PNPI), 235-1080 (EEWP…KKQM), 1141-1196 (MRKD…SSPG), and 1293-1329 (ALQQ…NMVP). Residues 33–75 (GEESKQEKEQEREEQLMEDKKRKKEDKKKKEATQKVTEQKTKV) adopt a coiled-coil conformation. Composition is skewed to basic and acidic residues over residues 34-52 (EESK…MEDK) and 60-77 (KKKE…KVPE). An interaction with argonaute proteins region spans residues 37–1028 (KQEKEQEREE…AMKPNSKSMQ (992 aa)). Positions 88 to 106 (AASPIGSSPSPPVNGGNNA) are enriched in low complexity. Over residues 123–139 (MPREVPPRFRCQQDHKV) the composition is skewed to basic and acidic residues. The segment covering 165–174 (APGANPNNNA) has biased composition (low complexity). Residues 180-190 (LLQSESGTAPE) are compositionally biased toward polar residues. 2 stretches are compositionally biased toward low complexity: residues 207 to 220 (GPGA…SPNP) and 248 to 260 (SSEN…SASN). Polar residues-rich tracts occupy residues 261–290 (PGSE…SGNE) and 306–327 (QPPN…TSGQ). Low complexity-rich tracts occupy residues 335 to 346 (GFSNFNPNSNPS), 363 to 380 (ETES…GQAS), and 416 to 425 (NSLNLSSPNP). Polar residues predominate over residues 438–451 (GNTSRSTDAPSQST). The span at 475 to 486 (SGQSNSGNNGNN) shows a compositional bias: low complexity. Polar residues-rich tracts occupy residues 504–528 (GSKS…PQDN), 564–575 (GPNQPNSSTGAW), 611–623 (TGSN…SDSH), and 655–667 (LSNT…QIKQ). Basic and acidic residues predominate over residues 675-688 (EVPRPEGKSDKGTE). 2 stretches are compositionally biased toward polar residues: residues 774 to 783 (QPNQGWTSGK) and 793 to 804 (VKNNNWESSANK). A compositionally biased stretch (gly residues) spans 809–824 (WGEGGQNEIGTWGNGG). Polar residues predominate over residues 846 to 857 (TGRQPNSWNKQH). Ser913 is modified (phosphoserine). 5 stretches are compositionally biased toward polar residues: residues 934–950 (NSYN…NSQG), 964–975 (TGKSASVWSKST), 1004–1027 (ASTT…SKSM), 1057–1072 (TAGS…SASW), and 1175–1195 (GNST…SSSP). The tract at residues 1191–1700 (LSSSPGLRAQ…LAEFATEDEV (510 aa)) is silencing domain; interaction with CNOT1 and PAN3. A compositionally biased stretch (low complexity) spans 1295-1307 (QQQQQQQQQQQRQ). Position 1409 is a phosphoserine (Ser1409). At Thr1426 the chain carries Phosphothreonine. Ser1438 is modified (phosphoserine). Phosphothreonine is present on Thr1441. Positions 1449–1467 (SNASWPPEFQPGVPWKGIQ) are PABPC1-interacting motif-2 (PAM2). Positions 1568–1619 (SSRNTTPLTRPPPGLTNPKPASPWSSTAPRSVRGWGTQDSRIASASTWSDGG) are disordered. Residues 1604 to 1617 (TQDSRIASASTWSD) show a composition bias toward polar residues. Positions 1625 to 1697 (YWLVLHNLTP…TTILAEFATE (73 aa)) constitute an RRM domain. Disordered regions lie at residues 1706 to 1740 (QAQP…GPAL) and 1786 to 1810 (EDPH…SDSI). The span at 1722–1733 (GWQSLETSQNQA) shows a compositional bias: polar residues. Positions 1792-1801 (GSPAPLLPGD) are enriched in low complexity. Phosphoserine occurs at positions 1793 and 1809.

The protein belongs to the GW182 family. In terms of assembly, interacts with AGO1, AGO2, AGO3 and AGO4. Interacts with CNOT1; the interaction mediates the association with the CCR4-NOT complex. Interacts with PAN3; the interaction mediates the association with the PAN complex. Interacts with MOV10; the interaction is direct and RNA-dependent.

It is found in the cytoplasm. Its subcellular location is the P-body. Functionally, plays a role in RNA-mediated gene silencing by both micro-RNAs (miRNAs) and short interfering RNAs (siRNAs). Required for miRNA-dependent translational repression and siRNA-dependent endonucleolytic cleavage of complementary mRNAs by argonaute family proteins. As scaffolding protein associates with argonaute proteins bound to partially complementary mRNAs and simultaneously can recruit CCR4-NOT and PAN deadenylase complexes. The sequence is that of Trinucleotide repeat-containing gene 6B protein (Tnrc6b) from Mus musculus (Mouse).